The following is a 127-amino-acid chain: UPF0102 protein SYNAS_23220 (127 aa).

Belongs to the UPF0102 family.

The chain is UPF0102 protein SYNAS_23220 from Syntrophus aciditrophicus (strain SB).